The following is a 355-amino-acid chain: Protein RecA (355 aa).

67–74 lines the ATP pocket; that stretch reads GPESSGKT.

It belongs to the RecA family.

It localises to the cytoplasm. Its function is as follows. Can catalyze the hydrolysis of ATP in the presence of single-stranded DNA, the ATP-dependent uptake of single-stranded DNA by duplex DNA, and the ATP-dependent hybridization of homologous single-stranded DNAs. It interacts with LexA causing its activation and leading to its autocatalytic cleavage. The sequence is that of Protein RecA from Shewanella amazonensis (strain ATCC BAA-1098 / SB2B).